Consider the following 605-residue polypeptide: Elongation factor 4 (605 aa).

One can recognise a tr-type G domain in the interval 11–193 (KRIRNFSIIA…RIVTQISPPK (183 aa)). GTP-binding positions include 23 to 28 (DHGKST) and 140 to 143 (NKVD).

This sequence belongs to the TRAFAC class translation factor GTPase superfamily. Classic translation factor GTPase family. LepA subfamily.

The protein localises to the cell membrane. The enzyme catalyses GTP + H2O = GDP + phosphate + H(+). Its function is as follows. Required for accurate and efficient protein synthesis under certain stress conditions. May act as a fidelity factor of the translation reaction, by catalyzing a one-codon backward translocation of tRNAs on improperly translocated ribosomes. Back-translocation proceeds from a post-translocation (POST) complex to a pre-translocation (PRE) complex, thus giving elongation factor G a second chance to translocate the tRNAs correctly. Binds to ribosomes in a GTP-dependent manner. In Phytoplasma australiense, this protein is Elongation factor 4.